Consider the following 512-residue polypeptide: ATP synthase subunit alpha (512 aa).

169–176 (GDRQTGKT) serves as a coordination point for ATP.

This sequence belongs to the ATPase alpha/beta chains family. F-type ATPases have 2 components, CF(1) - the catalytic core - and CF(0) - the membrane proton channel. CF(1) has five subunits: alpha(3), beta(3), gamma(1), delta(1), epsilon(1). CF(0) has three main subunits: a(1), b(2) and c(9-12). The alpha and beta chains form an alternating ring which encloses part of the gamma chain. CF(1) is attached to CF(0) by a central stalk formed by the gamma and epsilon chains, while a peripheral stalk is formed by the delta and b chains.

The protein resides in the cell inner membrane. The catalysed reaction is ATP + H2O + 4 H(+)(in) = ADP + phosphate + 5 H(+)(out). Functionally, produces ATP from ADP in the presence of a proton gradient across the membrane. The alpha chain is a regulatory subunit. The protein is ATP synthase subunit alpha of Rickettsia canadensis (strain McKiel).